The following is a 77-amino-acid chain: Large ribosomal subunit protein uL29 (77 aa).

Belongs to the universal ribosomal protein uL29 family.

The protein is Large ribosomal subunit protein uL29 of Gluconobacter oxydans (strain 621H) (Gluconobacter suboxydans).